The primary structure comprises 490 residues: GTPase Der (490 aa).

2 consecutive EngA-type G domains span residues 3-166 and 203-376; these read PVVA…VDEI and IKLA…DSST. GTP is bound by residues 9–16, 56–60, 118–121, 209–216, 256–260, and 321–324; these read GRPNVGKS, DTGGI, NKTD, DTAGV, and NKWD. The KH-like domain occupies 377–461; it reads RRQSTAMLTR…PIRIQFKEGE (85 aa).

It belongs to the TRAFAC class TrmE-Era-EngA-EngB-Septin-like GTPase superfamily. EngA (Der) GTPase family. As to quaternary structure, associates with the 50S ribosomal subunit.

Functionally, GTPase that plays an essential role in the late steps of ribosome biogenesis. This chain is GTPase Der, found in Enterobacter sp. (strain 638).